The following is a 520-amino-acid chain: Leucine carboxyl methyltransferase 1 (520 aa).

Disordered stretches follow at residues 1 to 116 (MQRD…DDAV) and 142 to 174 (TQEFSSTLPSNGGHPTGRSGFPQPHHPGSSIRR). Residues 79-89 (PSLRLSLGLPR) are compositionally biased toward low complexity. Composition is skewed to polar residues over residues 95-110 (HSGQTSDATNITSTAR) and 142-151 (TQEFSSTLPS). S-adenosyl-L-methionine is bound by residues R185, G210, D237, 305-306 (DV), and E343.

It belongs to the methyltransferase superfamily. LCMT family.

It carries out the reaction [phosphatase 2A protein]-C-terminal L-leucine + S-adenosyl-L-methionine = [phosphatase 2A protein]-C-terminal L-leucine methyl ester + S-adenosyl-L-homocysteine. Functionally, methylates the carboxyl group of the C-terminal leucine residue of protein phosphatase 2A catalytic subunits to form alpha-leucine ester residues. In Mycosarcoma maydis (Corn smut fungus), this protein is Leucine carboxyl methyltransferase 1 (PPM1).